We begin with the raw amino-acid sequence, 295 residues long: GTPase Era (295 aa).

The Era-type G domain maps to 7–176; the sequence is KTISVCIIGR…IKSKAKVSPW (170 aa). The interval 15–22 is G1; that stretch reads GRPNSGKS. Position 15–22 (15–22) interacts with GTP; it reads GRPNSGKS. The G2 stretch occupies residues 41–45; it reads QTTRS. A G3 region spans residues 62–65; it reads DTPG. GTP contacts are provided by residues 62 to 66 and 124 to 127; these read DTPGI and NKID. The G4 stretch occupies residues 124–127; it reads NKID. The tract at residues 152–154 is G5; sequence ISA. The 78-residue stretch at 204 to 281 folds into the KH type-2 domain; the sequence is LQQELPYKLT…HLFLFVKVHA (78 aa).

This sequence belongs to the TRAFAC class TrmE-Era-EngA-EngB-Septin-like GTPase superfamily. Era GTPase family. Monomer.

The protein resides in the cytoplasm. It is found in the cell inner membrane. An essential GTPase that binds both GDP and GTP, with rapid nucleotide exchange. Plays a role in 16S rRNA processing and 30S ribosomal subunit biogenesis and possibly also in cell cycle regulation and energy metabolism. The sequence is that of GTPase Era from Rickettsia typhi (strain ATCC VR-144 / Wilmington).